A 559-amino-acid polypeptide reads, in one-letter code: Mercuric reductase (559 aa).

An HMA domain is found at 1 to 64 (MYLNITGMTC…AVAGLGYKAT (64 aa)). A metal cation-binding residues include Cys-10 and Cys-13. FAD-binding residues include Ala-108, Gly-128, and Thr-133. Cys-134 and Cys-139 are oxidised to a cystine. Residues Lys-143, Ala-209, Asp-401, and Val-409 each contribute to the FAD site. 2 residues coordinate Hg(2+): Cys-556 and Cys-557.

It belongs to the class-I pyridine nucleotide-disulfide oxidoreductase family. In terms of assembly, homodimer. FAD is required as a cofactor.

The catalysed reaction is Hg + NADP(+) + H(+) = Hg(2+) + NADPH. Functionally, resistance to Hg(2+) in bacteria appears to be governed by a specialized system which includes mercuric reductase. MerA protein is responsible for volatilizing mercury as Hg(0). The chain is Mercuric reductase (merA) from Alcaligenes sp.